A 394-amino-acid chain; its full sequence is General receptor for phosphoinositides 1-associated scaffold protein (394 aa).

The tract at residues 1–51 is disordered; it reads MTLRRLRKLQQKEEATAAPDLAGRAPDSEAARAAPTPSGPPAAAAPPGAPG. Residues 37–49 show a composition bias toward pro residues; it reads PSGPPAAAAPPGA. Phosphothreonine is present on T76. Position 93 is a phosphoserine (S93). A PDZ domain is found at 100–189; the sequence is VLTLEKGDNQ…VLRLETLYGT (90 aa). The tract at residues 180 to 257 is interaction with PSCD3; the sequence is VLRLETLYGT…GAGLLPGSLP (78 aa). Position 236 is a phosphotyrosine (Y236). An Omega-N-methylarginine modification is found at R269. Residues 293 to 318 are disordered; the sequence is EPQALPPPPPPARAPGPGSAETPASV. Residues 296-306 are compositionally biased toward pro residues; that stretch reads ALPPPPPPARA. S386 carries the post-translational modification Phosphoserine.

As to quaternary structure, heteromer. Composed of TAMALIN, CYTH2 and at least one GRM1. Also interacts with CYTH3, GRM2, GRM3 and GRM5. As to expression, expressed in brain.

Its subcellular location is the cytoplasm. It is found in the perinuclear region. It localises to the cell membrane. The protein localises to the postsynaptic cell membrane. Functionally, plays a role in intracellular trafficking and contributes to the macromolecular organization of group 1 metabotropic glutamate receptors (mGluRs) at synapses. This is General receptor for phosphoinositides 1-associated scaffold protein from Rattus norvegicus (Rat).